The following is a 633-amino-acid chain: DNA mismatch repair protein MutL (633 aa).

It belongs to the DNA mismatch repair MutL/HexB family.

In terms of biological role, this protein is involved in the repair of mismatches in DNA. It is required for dam-dependent methyl-directed DNA mismatch repair. May act as a 'molecular matchmaker', a protein that promotes the formation of a stable complex between two or more DNA-binding proteins in an ATP-dependent manner without itself being part of a final effector complex. The polypeptide is DNA mismatch repair protein MutL (Macrococcus caseolyticus (strain JCSC5402) (Macrococcoides caseolyticum)).